Here is a 280-residue protein sequence, read N- to C-terminus: Gastrula zinc finger protein XlCGF46.1 (280 aa).

10 C2H2-type zinc fingers span residues 6-28 (FACKECGKSFSNKAYFESHKLMH), 34-56 (FECTECGKQFLLKQLLKSHQLIH), 62-84 (FVCPECGQGYKSKQGLQNHLLCH), 90-112 (FTCKECGKKFLLQKHLNRHKLTH), 118-140 (FICSECGKRFSRKDGLGMHQLIH), 146-168 (YVCTECGTSFRVRPQLRIHLRTH), 174-196 (FKCEDCGRVFATGTKLQVHKVTH), 202-224 (FTCEKCGKSFTQKTNLNTHQLTH), 230-252 (FKCEECGKCFSRKDYLRVHQRFH), and 258-280 (YKCNECEESFCRKDLLQTHELSH).

The protein belongs to the krueppel C2H2-type zinc-finger protein family.

The protein localises to the nucleus. Its function is as follows. May be involved in transcriptional regulation. The protein is Gastrula zinc finger protein XlCGF46.1 of Xenopus laevis (African clawed frog).